A 380-amino-acid chain; its full sequence is 1-deoxy-D-xylulose 5-phosphate reductoisomerase (380 aa).

Ser10, Gly11, Ser12, Ile13, Gly36, Lys37, Asn38, and Asn120 together coordinate NADPH. Lys121 provides a ligand contact to 1-deoxy-D-xylulose 5-phosphate. NADPH is bound at residue Glu122. Asp146 is a Mn(2+) binding site. Residues Ser147, Glu148, Ser172, and His195 each coordinate 1-deoxy-D-xylulose 5-phosphate. Glu148 contributes to the Mn(2+) binding site. Gly201 contributes to the NADPH binding site. 1-deoxy-D-xylulose 5-phosphate is bound by residues Ser208, Asn213, Lys214, and Glu217. Mn(2+) is bound at residue Glu217.

Belongs to the DXR family. The cofactor is Mg(2+). Mn(2+) serves as cofactor.

The enzyme catalyses 2-C-methyl-D-erythritol 4-phosphate + NADP(+) = 1-deoxy-D-xylulose 5-phosphate + NADPH + H(+). Its pathway is isoprenoid biosynthesis; isopentenyl diphosphate biosynthesis via DXP pathway; isopentenyl diphosphate from 1-deoxy-D-xylulose 5-phosphate: step 1/6. Its function is as follows. Catalyzes the NADPH-dependent rearrangement and reduction of 1-deoxy-D-xylulose-5-phosphate (DXP) to 2-C-methyl-D-erythritol 4-phosphate (MEP). The chain is 1-deoxy-D-xylulose 5-phosphate reductoisomerase from Bacillus cereus (strain Q1).